Reading from the N-terminus, the 68-residue chain is Serine rich endogenous peptide 13 (68 aa).

The first 31 residues, methionine 1 to alanine 31, serve as a signal peptide directing secretion. Positions arginine 33–proline 68 are disordered. Over residues glutamine 37–tyrosine 47 the composition is skewed to basic and acidic residues. Pro residues predominate over residues proline 48 to leucine 57. Positions proline 54–proline 68 match the SCOOP motif motif. Positions serine 60–serine 62 match the SxS motif essential for MIK2 binding motif.

It belongs to the serine rich endogenous peptide (SCOOP) phytocytokine family. Interacts with MIK2 (via extracellular leucine-rich repeat domain); this interaction triggers the formation of complex between MIK2 and the BAK1/SERK3 and SERK4 coreceptors, and subsequent BAK1 activation by phosphorylation. Mostly expressed in stems and flowers and, to a lower extent, in seedlings shoots, roots, siliques, seeds and leaves.

The protein localises to the cell membrane. The protein resides in the secreted. It localises to the extracellular space. Its subcellular location is the apoplast. In terms of biological role, brassicaceae-specific phytocytokine (plant endogenous peptide released into the apoplast) perceived by MIK2 in a BAK1/SERK3 and SERK4 coreceptors-dependent manner, that modulates various physiological and antimicrobial processes including growth prevention and reactive oxygen species (ROS) response regulation. Promotes the expression of immune-related marker genes (e.g. WRKY30, WRKY33 and CYP81F2) in a MIK2-dependent manner. Inhibits root growth and regulates root meristems. Prevents general growth and development. Exhibits antibacterial effects against Pseudomonas syringae pv. tomato DC3000, Ralstonia solanacearum, Bacillus subtilis and Agrobacterium tumefaciens, thus being an antimicrobial peptide (AMP). The sequence is that of Serine rich endogenous peptide 13 from Arabidopsis thaliana (Mouse-ear cress).